The following is a 255-amino-acid chain: Probable iron chelatin transport ATP-binding protein jhp_0821 (255 aa).

Residues 3–240 (LEVKNLSFKY…HNLSALYDTP (238 aa)) enclose the ABC transporter domain. ATP is bound at residue 35–42 (APNGSGKT).

The protein belongs to the ABC transporter superfamily.

It is found in the cell inner membrane. Its function is as follows. Part of a binding-protein-dependent transport system for an iron chelatin. Probably responsible for energy coupling to the transport system (Potential). The polypeptide is Probable iron chelatin transport ATP-binding protein jhp_0821 (Helicobacter pylori (strain J99 / ATCC 700824) (Campylobacter pylori J99)).